A 263-amino-acid polypeptide reads, in one-letter code: Outer membrane protein OmpK (263 aa).

A signal peptide spans 1–20 (MRKSLLALSLLAATSAPVLA).

It belongs to the nucleoside-specific channel-forming outer membrane porin (Tsx) (TC 1.B.10) family.

The protein resides in the cell outer membrane. Serves as receptor for a broad-host-range vibriophage, KVP40. The polypeptide is Outer membrane protein OmpK (Vibrio parahaemolyticus).